The following is a 269-amino-acid chain: Serine/arginine-rich splicing factor 5 (269 aa).

The RRM 1 domain occupies 4 to 74; that stretch reads CRVFIGRLNP…ERVTIEHARA (71 aa). Positions 73 to 105 are disordered; it reads RARSRGGRGRGRYSDRFSSRRPRNDRRNAPPVR. A compositionally biased stretch (basic residues) spans 74-83; the sequence is ARSRGGRGRG. S86 carries the post-translational modification Phosphoserine. The 82-residue stretch at 108 to 189 folds into the RRM 2 domain; that stretch reads NRLIVENLSS…SKRHRSRSRS (82 aa). The residue at position 167 (K167) is an N6-acetyllysine. The tract at residues 174 to 269 is disordered; sequence IKLIEGSKRH…SRSRSVDSGN (96 aa). The segment covering 181 to 226 has biased composition (basic residues); it reads KRHRSRSRSRSRTRSSSRSRSRSRSRRSKSYSRSRSRSRSRSKSRS. 5 positions are modified to phosphoserine: S224, S226, S230, S247, and S250. A compositionally biased stretch (low complexity) spans 239-251; the sequence is RGSSSRSKSPASV.

This sequence belongs to the splicing factor SR family. As to quaternary structure, found in a pre-mRNA splicing complex with SRSF4/SFRS4, SRSF5/SFRS5, SNRNP70, SNRPA1, SRRM1 and SRRM2. Interacts with RBMY; the interaction inhibits SRSF5 pre-mRNA splicing. Interacts (via RS domain) with PHF5A (via N-terminus). In terms of processing, extensively phosphorylated on serine residues in the RS domain.

Its subcellular location is the nucleus. In terms of biological role, may be required for progression through G1 and entry into S phase of cell growth. May play a regulatory role in pre-mRNA splicing. Autoregulates its own expression. Plays a role in constitutive splicing and can modulate the selection of alternative splice sites. The polypeptide is Serine/arginine-rich splicing factor 5 (Srsf5) (Mus musculus (Mouse)).